A 287-amino-acid polypeptide reads, in one-letter code: Nucleotide-binding protein GM21_3387 (287 aa).

8-15 (GLSGSGKS) serves as a coordination point for ATP. 59-62 (DIRS) lines the GTP pocket.

Belongs to the RapZ-like family.

In terms of biological role, displays ATPase and GTPase activities. This chain is Nucleotide-binding protein GM21_3387, found in Geobacter sp. (strain M21).